Consider the following 914-residue polypeptide: Protein translocase subunit SecA (914 aa).

Residues Q87, G105–T109, and D500 contribute to the ATP site. Zn(2+) contacts are provided by C898, C900, C909, and H910.

Belongs to the SecA family. In terms of assembly, monomer and homodimer. Part of the essential Sec protein translocation apparatus which comprises SecA, SecYEG and auxiliary proteins SecDF-YajC and YidC. Requires Zn(2+) as cofactor.

Its subcellular location is the cell inner membrane. It is found in the cytoplasm. It carries out the reaction ATP + H2O + cellular proteinSide 1 = ADP + phosphate + cellular proteinSide 2.. Part of the Sec protein translocase complex. Interacts with the SecYEG preprotein conducting channel. Has a central role in coupling the hydrolysis of ATP to the transfer of proteins into and across the cell membrane, serving as an ATP-driven molecular motor driving the stepwise translocation of polypeptide chains across the membrane. This chain is Protein translocase subunit SecA, found in Acidithiobacillus ferrooxidans (strain ATCC 23270 / DSM 14882 / CIP 104768 / NCIMB 8455) (Ferrobacillus ferrooxidans (strain ATCC 23270)).